Reading from the N-terminus, the 243-residue chain is Small ribosomal subunit protein uS3 (243 aa).

The region spanning 39–110 is the KH type-2 domain; it reads IRKFIHKKYG…QVRINVVEVE (72 aa). A disordered region spans residues 217–243; sequence QQLPVGATPRRRAGRRPQQFEDRSNEG. The span at 234-243 shows a compositional bias: basic and acidic residues; that stretch reads QQFEDRSNEG.

It belongs to the universal ribosomal protein uS3 family. As to quaternary structure, part of the 30S ribosomal subunit. Forms a tight complex with proteins S10 and S14.

In terms of biological role, binds the lower part of the 30S subunit head. Binds mRNA in the 70S ribosome, positioning it for translation. The polypeptide is Small ribosomal subunit protein uS3 (Synechococcus sp. (strain WH7803)).